A 358-amino-acid polypeptide reads, in one-letter code: Aromatic amino acid aminotransferase (358 aa).

K214 carries the N6-(pyridoxal phosphate)lysine modification.

This sequence belongs to the class-II pyridoxal-phosphate-dependent aminotransferase family. Homodimer. It depends on pyridoxal 5'-phosphate as a cofactor.

The enzyme catalyses an aromatic L-alpha-amino acid + 2-oxoglutarate = an aromatic oxo-acid + L-glutamate. In terms of biological role, aminotransferase that catalyzes the conversion of aromatic amino acids and 2-oxoglutarate into corresponding aromatic oxo acids and L-glutamate. The chain is Aromatic amino acid aminotransferase from Rhodococcus opacus (strain B4).